We begin with the raw amino-acid sequence, 329 residues long: Malate dehydrogenase 2 (329 aa).

Residue 12–18 coordinates NAD(+); that stretch reads GAAGQIA. Substrate is bound by residues arginine 93 and arginine 99. NAD(+)-binding positions include asparagine 106, glutamine 113, and 130–132; that span reads VGN. Substrate-binding residues include asparagine 132 and arginine 163. Residue histidine 188 is the Proton acceptor of the active site.

The protein belongs to the LDH/MDH superfamily. MDH type 2 family.

The catalysed reaction is (S)-malate + NAD(+) = oxaloacetate + NADH + H(+). Its function is as follows. Catalyzes the reversible oxidation of malate to oxaloacetate. The sequence is that of Malate dehydrogenase 2 from Burkholderia thailandensis (strain ATCC 700388 / DSM 13276 / CCUG 48851 / CIP 106301 / E264).